A 777-amino-acid chain; its full sequence is Subtilisin-like protease SBT3.3 (777 aa).

A signal peptide spans 1 to 24 (MRSFRSSILLVLLSLITVLNATRA). Residues 25-111 (RSETESKVHI…VIPDGFHELA (87 aa)) constitute a propeptide, removed in mature form. The region spanning 32-109 (VHIVYLGEKK…VHVIPDGFHE (78 aa)) is the Inhibitor I9 domain. The Peptidase S8 domain maps to 115-624 (TWEYLGLSSA…GGIVNPEKAA (510 aa)). An N-linked (GlcNAc...) asparagine glycan is attached at Asn-131. The active-site Charge relay system is Asp-145. A glycan (N-linked (GlcNAc...) asparagine) is linked at Asn-204. His-220 functions as the Charge relay system in the catalytic mechanism. Residues Asn-235, Asn-397, Asn-412, Asn-508, and Asn-540 are each glycosylated (N-linked (GlcNAc...) asparagine). The 79-residue stretch at 403–481 (VCESLNLNPN…ELGTDILSYI (79 aa)) folds into the PA domain. The active-site Charge relay system is the Ser-555. The N-linked (GlcNAc...) asparagine glycan is linked to Asn-647.

It belongs to the peptidase S8 family.

Its subcellular location is the secreted. It localises to the extracellular space. The protein resides in the extracellular matrix. In terms of biological role, serine protease that plays a role in the control of the establishment of immune priming and systemic induced resistance. The polypeptide is Subtilisin-like protease SBT3.3 (Arabidopsis thaliana (Mouse-ear cress)).